A 60-amino-acid polypeptide reads, in one-letter code: Ribosome modulation factor (60 aa).

Belongs to the ribosome modulation factor family.

The protein resides in the cytoplasm. In terms of biological role, during stationary phase, converts 70S ribosomes to an inactive dimeric form (100S ribosomes). The polypeptide is Ribosome modulation factor (Kangiella koreensis (strain DSM 16069 / JCM 12317 / KCTC 12182 / SW-125)).